Consider the following 282-residue polypeptide: Fused uL13/uS9 ribosomal subunit protein (282 aa).

The large ribosomal subunit protein uL13 stretch occupies residues 1–141 (MLLMIINGEG…LGEISELLGA (141 aa)). Residues 150–282 (MKKVIHTSGK…ARARRQKSYR (133 aa)) form a small ribosomal subunit protein uS9 region. The segment at 259 to 282 (DPRRSEPKKYGGRGARARRQKSYR) is disordered. Positions 273–282 (ARARRQKSYR) are enriched in basic residues.

The protein in the N-terminal section; belongs to the universal ribosomal protein uL13 family. It in the C-terminal section; belongs to the universal ribosomal protein uS9 family. As to quaternary structure, L13 is part of the 50S ribosomal subunit. S9 is part of the 30S ribosomal subunit.

L13 protein is one of the early assembly proteins of the 50S ribosomal subunit, although it is not seen to bind rRNA by itself. It is important during the early stages of 50S assembly. This is Fused uL13/uS9 ribosomal subunit protein (rpl13/rps9) from Methanothermobacter thermautotrophicus (strain ATCC 29096 / DSM 1053 / JCM 10044 / NBRC 100330 / Delta H) (Methanobacterium thermoautotrophicum).